Consider the following 95-residue polypeptide: Small ubiquitin-related modifier 2 (95 aa).

Residue Met-1 forms a Peptide (Met-Gly) (interchain with G-Cter in ubiquitin) linkage. Glycyl lysine isopeptide (Lys-Gly) (interchain with G-Cter in SUMO2) cross-links involve residues Lys-5 and Lys-7. Lys-11 is modified (N6-acetyllysine; alternate). Lys-11 is covalently cross-linked (Glycyl lysine isopeptide (Lys-Gly) (interchain with G-Cter in SUMO); alternate). A Glycyl lysine isopeptide (Lys-Gly) (interchain with G-Cter in SUMO1); alternate cross-link involves residue Lys-11. Residue Lys-11 forms a Glycyl lysine isopeptide (Lys-Gly) (interchain with G-Cter in SUMO2); alternate linkage. Lys-11 participates in a covalent cross-link: Glycyl lysine isopeptide (Lys-Gly) (interchain with G-Cter in ubiquitin); alternate. A Ubiquitin-like domain is found at 16-95 (DHINLKVAGQ…VFQQQTGGVY (80 aa)). A Glycyl lysine isopeptide (Lys-Gly) (interchain with G-Cter in SUMO2) cross-link involves residue Lys-21. Residue Gly-93 forms a Glycyl lysine isopeptide (Gly-Lys) (interchain with K-? in acceptor proteins) linkage. The propeptide occupies 94–95 (VY).

The protein belongs to the ubiquitin family. SUMO subfamily. Interacts with SAE2 and UBE2I. Interacts with ZNF451. Identified in a complex with ZNF451 and UBE2I/UBC9, where one ZNF451 interacts with one UBE2I/UBC9 and two SUMO2 chains, one bound to the UBE2I/UBC9 active site and the other to another region of the same UBE2I/UBC9 molecule. Covalently attached to a number of proteins. Interacts with PELP1. Interacts with USP25; the interaction sumoylates USP25. Interacts with SIMC1, CASP8AP2, RNF111 and SOBP (via SIM domains). Interacts with MTA1. Interacts with HINT1. Interacts with GCNA (via SIM domains); this interaction allows the GCNA recruitment to DPCs sites. Post-translationally, polymeric chains can be formed through Lys-11 cross-linking. Polymeric SUMO2 chains undergo 'Lys-6'-, 'Lys-11'-, 'Lys-48'- and 'Lys-63'-linked polyubiquitination by RNF4. In terms of processing, cleavage of precursor form by SENP1 or SENP2 is necessary for function. Monoubiquitinated N-terminally by UBE2W, which primes it for RNF4-dependent polyubiquitination by the UBE2V1-UBE2N heterodimer.

Its subcellular location is the nucleus. The protein localises to the PML body. Its function is as follows. Ubiquitin-like protein that can be covalently attached to proteins as a monomer or as a lysine-linked polymer. Covalent attachment via an isopeptide bond to its substrates requires prior activation by the E1 complex SAE1-SAE2 and linkage to the E2 enzyme UBE2I, and can be promoted by an E3 ligase such as PIAS1-4, RANBP2 or CBX4. This post-translational modification on lysine residues of proteins plays a crucial role in a number of cellular processes such as nuclear transport, DNA replication and repair, mitosis and signal transduction. Polymeric SUMO2 chains are also susceptible to polyubiquitination which functions as a signal for proteasomal degradation of modified proteins. Plays a role in the regulation of sumoylation status of SETX. This is Small ubiquitin-related modifier 2 from Bos taurus (Bovine).